Reading from the N-terminus, the 78-residue chain is RTX-VII (78 aa).

An N-terminal signal peptide occupies residues 1–22 (MKTIVYLIVSILLLSSTVLVLA). Positions 23 to 40 (EGNAASHELQEYPIEEQR) are excised as a propeptide. 4 disulfide bridges follow: C42-C58, C47-C63, C57-C73, and C65-C71. R76 is modified (arginine amide).

Expressed by the venom gland.

It is found in the secreted. Functionally, agonist of rat Nav1.3/SCN3A. This toxin increases the peak current amplitude, and potently inhibits the fast inactivation of the channel (EC(50)=120 nM). The inhibition of fast inactivation is voltage-independent (depolarizing voltages ranging from 220 mV to 130 mV). The toxin might bind to the domain IV of the Nav1.3 channel, while domain II might not participate in interacting with the toxin but could determine the efficacy of RTX-VII. In vivo, when intracerebroventricularly injected into mice, the toxin causes involuntary body twitching (seizure-like symptoms). The protein is RTX-VII of Macrothele raveni (Funnel-web spider).